A 201-amino-acid polypeptide reads, in one-letter code: Probable calcium-binding protein CML15 (201 aa).

Residues 1–55 (MGKVRAFFSRKGRGNSSGRSRSMREAAMNVDWSPRPSDLAAAAAAKPRPPAAEDE) are disordered. EF-hand domains lie at 51-86 (AAED…VGHA), 87-122 (VTDD…PPGD), 125-160 (AAEE…IGEA), and 161-196 (ATVA…GAGF). Residues Asp-64, Asn-66, Asp-68, Arg-70, Glu-75, Asp-100, Asp-102, Asp-104, Tyr-106, Glu-111, Asp-138, Asp-140, Asn-142, Glu-149, Asp-174, Asn-176, Asp-178, and Glu-185 each coordinate Ca(2+).

In terms of biological role, potential calcium sensor. The protein is Probable calcium-binding protein CML15 (CML15) of Oryza sativa subsp. japonica (Rice).